The primary structure comprises 117 residues: Large ribosomal subunit protein bL20 (117 aa).

Belongs to the bacterial ribosomal protein bL20 family.

Binds directly to 23S ribosomal RNA and is necessary for the in vitro assembly process of the 50S ribosomal subunit. It is not involved in the protein synthesizing functions of that subunit. The polypeptide is Large ribosomal subunit protein bL20 (Rickettsia typhi (strain ATCC VR-144 / Wilmington)).